We begin with the raw amino-acid sequence, 481 residues long: MDPAVDKILAGKYPAKQHARRVAEALKAAGQDGSGVIYLEGTKTRMAEDSDEAVPFRQRRNFYYLSGCDLSDSYVTYNIDKDELVLYIPPADPDEVIWTGLPMSAEEALKVYDVDVVLPSTEVNAQLAHCCANKDSKPKRVYAIPDRVCPETTFLPFDDTNWDVLAQAIEQCRKVKDEYEIALLKRANEISAQAHLAVMKASKTAKNERELEAIFRSTCLYYDSRQQSYGPIMARGVNGATLHYQTNNMDIDDPVTGERPSLLIDAGGEYRMYASDITRAIPLSGKFSPEARQIYDIVLDMQMQCFGMIKAGVAWDDVHALAHKVAIKGLVNLGILRGSEEELFQKGVSVAFFPHGLGHYMGMDTHDVGGNPNFADPNPMFKYLRLRGTLSPNEVVTVEPGVYFCRFIIEPYLKSPELSKYIDSAVLDKYWKVGGVRIEDNLVVTQDGFQNLTTVPKDAEEVERIVQQGVPAFVLVSINDI.

Mn(2+)-binding residues include Asp-265, Asp-276, Glu-399, and Glu-439.

This sequence belongs to the peptidase M24B family. It depends on Mn(2+) as a cofactor.

The catalysed reaction is Release of any N-terminal amino acid, including proline, that is linked to proline, even from a dipeptide or tripeptide.. In terms of biological role, catalyzes the removal of a penultimate prolyl residue from the N-termini of peptides. This Uncinocarpus reesii (strain UAMH 1704) protein is Probable Xaa-Pro aminopeptidase PEPP (PEPP).